Reading from the N-terminus, the 87-residue chain is Small ribosomal subunit protein eS21 (87 aa).

Met1 carries the post-translational modification N-acetylmethionine.

It belongs to the eukaryotic ribosomal protein eS21 family. Component of the small ribosomal subunit (SSU). Mature yeast ribosomes consist of a small (40S) and a large (60S) subunit. The 40S small subunit contains 1 molecule of ribosomal RNA (18S rRNA) and at least 33 different proteins. The large 60S subunit contains 3 rRNA molecules (25S, 5.8S and 5S rRNA) and at least 46 different proteins. Interacts with uS2A and uS2B, strongest interaction is with uS2B.

It localises to the cytoplasm. Its subcellular location is the nucleus. Component of the ribosome, a large ribonucleoprotein complex responsible for the synthesis of proteins in the cell. The small ribosomal subunit (SSU) binds messenger RNAs (mRNAs) and translates the encoded message by selecting cognate aminoacyl-transfer RNA (tRNA) molecules. The large subunit (LSU) contains the ribosomal catalytic site termed the peptidyl transferase center (PTC), which catalyzes the formation of peptide bonds, thereby polymerizing the amino acids delivered by tRNAs into a polypeptide chain. The nascent polypeptides leave the ribosome through a tunnel in the LSU and interact with protein factors that function in enzymatic processing, targeting, and the membrane insertion of nascent chains at the exit of the ribosomal tunnel. eS21 is required for the processing of the 20S rRNA-precursor to mature 18S rRNA in a late step of the maturation of 40S ribosomal subunits. Has a physiological role leading to 18S rRNA stability. The protein is Small ribosomal subunit protein eS21 (rps21) of Schizosaccharomyces pombe (strain 972 / ATCC 24843) (Fission yeast).